The following is a 1720-amino-acid chain: MAAAPSALLLLPPFPVLSTYRLQSRSRPSAPETDDSRVGGIMRGEKNYYFRGAAGDHGSCPTTTSPLASALLMPSEAVSSSWSESGGGLSGGDEEDTRLLQLLRTARDPSEAFQALQAALPRRGGRLGFPRRKEALYRALGRVLVEGGSDEKRLCLQLLSDVLRGQGEAGQLEEAFSLALLPQLVVSLREENPALRKDALQILHICLKRSPGEVLRTLIQQGLESTDARLRASTALLLPILLTTEDLLLGLDLTEVIISLARKLGDQETEEESETAFSALQQIGERLGQDRFQSYISRLPSALRRHYNRRLESQFGSQVPYYLELEASGFPEDPLPCAVTLSNSNLKFGIIPQELHSRLLDQEDYKNRTQAVEELKQVLGKFNPSSTPHSSLVGFISLLYNLLDDSNFKVVHGTLEVLHLLVIRLGEQVQQFLGPVIAASVKVLADNKLVIKQEYMKIFLKLMKEVGPQQVLCLLLEHLKHKHSRVREEVVNICICSLLTYPSEDFDLPKLSFDLAPALVDSKRRVRQAALEAFAVLASSMGSGKTSILFKAVDTVELQDNGDGVMNAVQARLARKTLPRLTEQGFVEYAVLMPSSAGGRSNHLAHGADTDWLLAGNRTQSAHCHCGDHVRDSMHIYGSYSPTICTRRVLSAGKGKNKLPWENEQPGIMGENQTSTSKDIEQFSTYDFIPSAKLKLSQGMPVNDDLCFSRKRVSRNLFQNSRDFNPDCLPLCAAGTTGTHQTNLSGKCAQLGFSQICGKTGSVGSDLQFLGTTSSHQEKVYASLNFGSKTQQTFGSQTECTSSNGQNPSPGAYILPSYPVSSPRTSPKHTSPLIISPKKSQDNSVNFSNSWPLKSFEGLSKPSPQKKLVSQKSSDPTGRNHGENSQEKPPVQLTPALVRSPSSRRGLNGTKPVPPIPRGISLLPDKADLSTVGHKKKEPDDIWKCEKDSLPIDLSELNFKDKDLDQEEMHSSLRSLRNSAAKKRAKLSGSTSDLESPDSAMKLDLTMDSPSLSSSPNINSYSESGVYSQESLTSSLSTTPQGKRIMSDIFPTFGSKPCPTRLSSAKKKISHIAEQSPSAGSSSNPQQISSFDFTTTKALSEDSVVVVGKGVFGSLSSAPATCSQSVISSVENGDTFSIKQSIEPPSGIYGRSVQQNISSYLDVENEKDAKVSISKSTYNKMRQKRKEEKELFHNKDCEKKEKNSWERMRHTGTEKMASESETPTGAISQYKERMPSVTHSPEIMDLSELRPFSKPEIALTEALRLLADEDWEKKIEGLNFIRCLAAFHSEILNTKLHETNFAVVQEVKNLRSGVSRAAVVCLSDLFTYLKKSMDQELDTTVKVLLHKAGESNTFIREDVDKALRAMVNNVTPARAVVSLINGGQRYYGRKMLFFMMCHPNFEKMLEKYVPSKDLPYIKDSVRNLQQKGLGEIPLDTPSAKGRRSHTGSVGNTRSSSVSRDAFNSAERAVTEVREVTRKSVPRNSLESAEYLKLITGLLNAKDFRDRINGIKQLLSDTENNQDLVVGNIVKIFDAFKSRLHDSNSKVNLVALETMHKMIPLLRDHLSPIINMLIPAIVDNNLNSKNPGIYAAATNVVQALSQHVDNYLLLQPFCTKAQFLNGKAKQDMTEKLADIVTELYQRKPHATEQKVLVVLWHLLGNMTNSGSLPGAGGNIRTATAKLSKALFAQMGQNLLNQAASQPPHIKKSLEELLDMTILNEL.

TOG regions lie at residues 94–312 and 352–596; these read EEDT…RRLE and PQEL…MPSS. HEAT repeat units follow at residues 175-212, 214-247, 251-289, 345-384, 390-427, 431-466, 467-504, and 506-543; these read AFSL…RSPG, VLRT…TEDL, LDLT…RLGQ, NLKF…KFNP, SSLV…RLGE, QFLG…MKEV, GPQQ…YPSE, and FDLP…SMGS. Polar residues-rich tracts occupy residues 794-809, 819-829, 842-852, and 868-877; these read FGSQ…QNPS, PVSSPRTSPKH, DNSVNFSNSWP, and LVSQKSSDPT. 3 disordered regions span residues 794–924, 970–998, and 1067–1087; these read FGSQ…SLLP, HSSL…ESPD, and KKIS…NPQQ. A compositionally biased stretch (polar residues) spans 1073 to 1087; it reads AEQSPSAGSSSNPQQ. A TOG 3 region spans residues 1256–1425; sequence EIALTEALRL…YIKDSVRNLQ (170 aa). HEAT repeat units follow at residues 1294-1331 and 1335-1372; these read TKLH…YLKK and QELD…NVTP. Residues 1430-1462 are disordered; sequence GEIPLDTPSAKGRRSHTGSVGNTRSSSVSRDAF. A compositionally biased stretch (polar residues) spans 1446–1458; that stretch reads TGSVGNTRSSSVS. The segment at 1484–1720 is TOG 4; the sequence is SLESAEYLKL…LLDMTILNEL (237 aa). 3 HEAT repeats span residues 1485–1522, 1526–1563, and 1567–1605; these read LESA…NNQD, GNIV…LLRD, and PIIN…HVDN.

The protein belongs to the Crescerin family. As to quaternary structure, interacts with ARMC9, CCDC66, CEP104 and CSPP1.

The protein resides in the cell projection. Its subcellular location is the cilium. It localises to the cytoplasm. The protein localises to the cytoskeleton. It is found in the cilium axoneme. Involved in ciliogenesis. It is required for appropriate acetylation and polyglutamylation of ciliary microtubules, and regulation of cilium length. Interacts with microtubules and promotes microtubule polymerization via its HEAT repeat domains, especially those in TOG region 2 and 4. The polypeptide is TOG array regulator of axonemal microtubules protein 1 (Homo sapiens (Human)).